A 356-amino-acid polypeptide reads, in one-letter code: MIETDKLAAERIIAATPASSHEEAFERALRPRQLDEYVGQEKVRDQLEIFIEAAKRRSEALDHVLLFGPPGLGKTTLAHIIAREMGVNLRQTSGPVLERAGDLAALLTNLEANDVLFIDEIHRLSPVVEEILYPALEDYQIDIMIGEGPAARSVKLDLQPFTLVGATTRAGMLTNPLRDRFGIVARLEFYDAEQLSRIVRRSAALLNAQIDPAGALEIAKRSRGTPRIANRLLRRVRDYAEVKADGNITAAVADAALAMLDVDPVGFDLMDRKLLEAILHKFDGGPVGVDNLAAAIGEERDTIEDVLEPYLIQQGFLQRTPRGRVATLLTYRHFGLSAPDAANPVRNLWDTPDAEC.

Residues 4–190 (TDKLAAERII…FGIVARLEFY (187 aa)) are large ATPase domain (RuvB-L). ATP is bound by residues Leu-29, Arg-30, Gly-71, Lys-74, Thr-75, Thr-76, 137 to 139 (EDY), Arg-180, Tyr-190, and Arg-227. Thr-75 contributes to the Mg(2+) binding site. Positions 191 to 261 (DAEQLSRIVR…VADAALAMLD (71 aa)) are small ATPAse domain (RuvB-S). Residues 264-356 (PVGFDLMDRK…NLWDTPDAEC (93 aa)) form a head domain (RuvB-H) region. Arg-300, Arg-319, and Arg-324 together coordinate DNA.

The protein belongs to the RuvB family. Homohexamer. Forms an RuvA(8)-RuvB(12)-Holliday junction (HJ) complex. HJ DNA is sandwiched between 2 RuvA tetramers; dsDNA enters through RuvA and exits via RuvB. An RuvB hexamer assembles on each DNA strand where it exits the tetramer. Each RuvB hexamer is contacted by two RuvA subunits (via domain III) on 2 adjacent RuvB subunits; this complex drives branch migration. In the full resolvosome a probable DNA-RuvA(4)-RuvB(12)-RuvC(2) complex forms which resolves the HJ.

It localises to the cytoplasm. The catalysed reaction is ATP + H2O = ADP + phosphate + H(+). Its function is as follows. The RuvA-RuvB-RuvC complex processes Holliday junction (HJ) DNA during genetic recombination and DNA repair, while the RuvA-RuvB complex plays an important role in the rescue of blocked DNA replication forks via replication fork reversal (RFR). RuvA specifically binds to HJ cruciform DNA, conferring on it an open structure. The RuvB hexamer acts as an ATP-dependent pump, pulling dsDNA into and through the RuvAB complex. RuvB forms 2 homohexamers on either side of HJ DNA bound by 1 or 2 RuvA tetramers; 4 subunits per hexamer contact DNA at a time. Coordinated motions by a converter formed by DNA-disengaged RuvB subunits stimulates ATP hydrolysis and nucleotide exchange. Immobilization of the converter enables RuvB to convert the ATP-contained energy into a lever motion, pulling 2 nucleotides of DNA out of the RuvA tetramer per ATP hydrolyzed, thus driving DNA branch migration. The RuvB motors rotate together with the DNA substrate, which together with the progressing nucleotide cycle form the mechanistic basis for DNA recombination by continuous HJ branch migration. Branch migration allows RuvC to scan DNA until it finds its consensus sequence, where it cleaves and resolves cruciform DNA. This is Holliday junction branch migration complex subunit RuvB from Burkholderia pseudomallei (strain 668).